The primary structure comprises 205 residues: Pyridoxine/pyridoxamine 5'-phosphate oxidase (205 aa).

Residues 53 to 58 (RMVLLK), 68 to 69 (YT), Lys75, and Gln97 contribute to the FMN site. Residue Lys58 coordinates substrate. Residues Tyr115, Arg119, and Ser123 each coordinate substrate. FMN contacts are provided by residues 132-133 (QS) and Trp177. 183–185 (RLH) is a substrate binding site. Position 187 (Arg187) interacts with FMN.

It belongs to the pyridoxamine 5'-phosphate oxidase family. Homodimer. FMN serves as cofactor.

It catalyses the reaction pyridoxamine 5'-phosphate + O2 + H2O = pyridoxal 5'-phosphate + H2O2 + NH4(+). The catalysed reaction is pyridoxine 5'-phosphate + O2 = pyridoxal 5'-phosphate + H2O2. The protein operates within cofactor metabolism; pyridoxal 5'-phosphate salvage; pyridoxal 5'-phosphate from pyridoxamine 5'-phosphate: step 1/1. It functions in the pathway cofactor metabolism; pyridoxal 5'-phosphate salvage; pyridoxal 5'-phosphate from pyridoxine 5'-phosphate: step 1/1. In terms of biological role, catalyzes the oxidation of either pyridoxine 5'-phosphate (PNP) or pyridoxamine 5'-phosphate (PMP) into pyridoxal 5'-phosphate (PLP). The protein is Pyridoxine/pyridoxamine 5'-phosphate oxidase of Mesorhizobium japonicum (strain LMG 29417 / CECT 9101 / MAFF 303099) (Mesorhizobium loti (strain MAFF 303099)).